We begin with the raw amino-acid sequence, 279 residues long: Protein phosphatase 1 regulatory subunit 3E (279 aa).

Phosphoserine is present on residues Ser16 and Ser33. The tract at residues 28 to 86 is disordered; it reads RSQRPSLEEEPEEEPGEGGTRFGARSRAHAPSRGRRARSAPAGGGGARAPRSRSPDTRK. Residues 51–65 are compositionally biased toward basic residues; sequence ARSRAHAPSRGRRAR. The residue at position 66 (Ser66) is a Phosphoserine. A PP1-binding motif motif is present at residues 87 to 90; it reads RVRF. The region spanning 154–259 is the CBM21 domain; the sequence is AARLLTQRIC…NNGGRDYALR (106 aa). A glycogen-binding motif region spans residues 176 to 198; that stretch reads GSARVVDLAYEKRVSVRWSADGW. Residues 248–256 form a substrate-binding motif region; that stretch reads WDNNGGRDY.

Expressed in skeletal muscle and heart with barely detectable levels in liver.

Acts as a glycogen-targeting subunit for PP1. PP1 is involved in glycogen metabolism and contributes to the activation of glycogen synthase leading to an increase in glycogen synthesis. This is Protein phosphatase 1 regulatory subunit 3E (PPP1R3E) from Homo sapiens (Human).